Reading from the N-terminus, the 475-residue chain is Beta-amyrin 16-alpha-hydroxylase CYP87D16 (475 aa).

A helical transmembrane segment spans residues 3-23 (VVGLIGVAVVTILITQYVYKW). Cysteine 423 contributes to the heme binding site.

It belongs to the cytochrome P450 family. Requires heme as cofactor.

It localises to the membrane. The enzyme catalyses beta-amyrin + reduced [NADPH--hemoprotein reductase] + O2 = 16alpha-hydroxy-beta-amyrin + oxidized [NADPH--hemoprotein reductase] + H2O + H(+). In terms of biological role, involved in the biosynthetic pathway of maesasaponins, which are oleanane-type saponins with diverse biological activities. Catalyzes the C-16alpha oxidation of beta-amyrin to form 16alpha-hydroxy-beta-amyrin. This Maesa lanceolata (False assegai) protein is Beta-amyrin 16-alpha-hydroxylase CYP87D16.